The following is a 479-amino-acid chain: Poly(A) polymerase catalytic subunit (479 aa).

Residues Asp202 and Asp204 contribute to the active site. Ca(2+)-binding residues include Asp202, Asp204, and Asp253.

Belongs to the poxviridae poly(A) polymerase catalytic subunit family. In terms of assembly, heterodimer of a large (catalytic) subunit and a small (regulatory) subunit.

It carries out the reaction RNA(n) + ATP = RNA(n)-3'-adenine ribonucleotide + diphosphate. Its function is as follows. Polymerase that creates the 3'-poly(A) tail of mRNA's. This is Poly(A) polymerase catalytic subunit (OPG063) from Camelus.